Consider the following 319-residue polypeptide: Ribonuclease Z (319 aa).

Residues His62, His64, Asp66, His67, His139, Asp209, and His268 each coordinate Zn(2+). The Proton acceptor role is filled by Asp66.

It belongs to the RNase Z family. Homodimer. Zn(2+) serves as cofactor.

It catalyses the reaction Endonucleolytic cleavage of RNA, removing extra 3' nucleotides from tRNA precursor, generating 3' termini of tRNAs. A 3'-hydroxy group is left at the tRNA terminus and a 5'-phosphoryl group is left at the trailer molecule.. In terms of biological role, zinc phosphodiesterase, which displays some tRNA 3'-processing endonuclease activity. Probably involved in tRNA maturation, by removing a 3'-trailer from precursor tRNA. This chain is Ribonuclease Z, found in Pseudomonas putida (strain ATCC 700007 / DSM 6899 / JCM 31910 / BCRC 17059 / LMG 24140 / F1).